A 1334-amino-acid chain; its full sequence is Adenylate cyclase type 9 (1334 aa).

Disordered regions lie at residues 1 to 28 (MASP…SNSV) and 49 to 71 (ISSS…GLRR). Over 1–113 (MASPPHQQLL…CFPQTQRRFR (113 aa)) the chain is Cytoplasmic. A compositionally biased stretch (polar residues) spans 16-28 (EVSCDSSGDSNSV). Gly residues predominate over residues 57–69 (ESGGVGRGGGGGL). The helical transmembrane segment at 114–134 (YALFYIGSACLLWGIYFGVHM) threads the bilayer. The Extracellular segment spans residues 135-137 (REK). The helical transmembrane segment at 138-158 (QMVFMVPALCFLLVCVAFFAF) threads the bilayer. Topologically, residues 159 to 167 (TFTKAYARR) are cytoplasmic. A helical transmembrane segment spans residues 168–187 (YVWTSGYTLLVFALTLAPQF). Residues 188 to 207 (QPWTLGERQRVQPRPAAPVD) lie on the Extracellular side of the membrane. The helical transmembrane segment at 208-227 (TCLSQVGSFSMCVEVLLLLY) threads the bilayer. At 228-233 (TVMHLP) the chain is on the cytoplasmic side. The chain crosses the membrane as a helical span at residues 234-250 (LYLSLFLGLSYSVLFET). The Extracellular portion of the chain corresponds to 251–269 (SAFRDESCTLLGGGAVYWE). Residues 270–290 (LLSKAFLHVCIHAIGIHLFIM) form a helical membrane-spanning segment. The Cytoplasmic segment spans residues 291 to 768 (SEVRSRSTFL…VKTFASATFS (478 aa)). The disordered stretch occupies residues 338–363 (QGDDESENSVKRHSTSSPKNRKKKPS). Over residues 348–363 (KRHSTSSPKNRKKKPS) the composition is skewed to basic residues. Positions 388, 389, and 432 each coordinate Mg(2+). Residues 388 to 393 (DIVGFT), 430 to 432 (LGD), and arginine 476 contribute to the ATP site. A disordered region spans residues 635–670 (GCQDEHKNSTKAPGGHSPKTQNGLLSPPQEEKLSNS). A helical transmembrane segment spans residues 769–789 (SLLDVFLSTTVFLILSVTCFL). Residues 790–800 (KHGMVASPPPP) lie on the Extracellular side of the membrane. A helical membrane pass occupies residues 801–821 (AAVVVFVIAILLEVLSLVISV). At 822–849 (RMVFFLEEVMACTKRLLELISGWLPRHF) the chain is on the cytoplasmic side. A helical transmembrane segment spans residues 850-870 (LGAILVSLPALAVFSHFTSDF). Residues 871–873 (ETN) are Extracellular-facing. Residues 874-894 (IHYTMFMCCAILIAIVQYCNF) traverse the membrane as a helical segment. Residues 895–902 (CQLSSWMR) are Cytoplasmic-facing. The helical transmembrane segment at 903 to 923 (SLLATVVGAVLLILLYVSLCP) threads the bilayer. Residues 924–957 (DSSVETLHLDLAQNLSSRKSPCNSSMPADVKRPA) are Extracellular-facing. N-linked (GlcNAc...) asparagine glycosylation is found at asparagine 937 and asparagine 946. A helical membrane pass occupies residues 958–978 (DLIGQEVILAVFLLLLLVWFL). Over 979–1334 (NRSFEVSYRL…LTKLNVSKSV (356 aa)) the chain is Cytoplasmic. ATP contacts are provided by residues lysine 1090, 1167 to 1169 (DIW), 1174 to 1178 (NIASR), and lysine 1214. Positions 1266–1303 (SVQNSDKTAHATDNSETKDALPSSKKLQKEPTKAEERC) are disordered. 2 stretches are compositionally biased toward basic and acidic residues: residues 1272–1284 (KTAH…ETKD) and 1292–1303 (LQKEPTKAEERC).

Belongs to the adenylyl cyclase class-4/guanylyl cyclase family. Requires Mg(2+) as cofactor. The cofactor is Mn(2+). As to expression, detected in embryonic heart (at protein level).

The protein localises to the cell membrane. It is found in the membrane. The catalysed reaction is ATP = 3',5'-cyclic AMP + diphosphate. Its activity is regulated as follows. Insensitive to calcium/calmodulin, forskolin and somatostatin. Stimulated by beta-adrenergic receptor activation. Activity is down-regulated by calcium/calcineurin. Its function is as follows. Adenylyl cyclase that catalyzes the formation of the signaling molecule cAMP in response to activation of G protein-coupled receptors. This chain is Adenylate cyclase type 9 (ADCY9), found in Gallus gallus (Chicken).